Here is a 922-residue protein sequence, read N- to C-terminus: MVYTISGIRFPVLPSLHKSTLRCDRRASSHSFFLKNNSSSFSRTSLYAKFSRDSETKSSTIAESDKVLIPEDQDNSVSLADQLENPDITSEDAQNLEDLTMKDGNKYNIDESTSSYREVGDEKGSVTSSSLVDVNTDTQAKKTSVHSDKKVKVDKPKIIPPPGTGQKIYEIDPLLQAHRQHLDFRYGQYKRIREEIDKYEGGLDAFSRGYEKFGFTRSATGITYREWAPGAKSAALVGDFNNWNPNADVMTKDAFGVWEIFLPNNADGSPPIPHGSRVKIHMDTPSGIKDSIPAWIKFSVQAPGEIPYNGIYYDPPEEEKYVFKHPQPKRPQSIRIYESHIGMSSPEPKINTYANFRDDVLPRIKKLGYNAVQIMAIQEHSYYASFGYHVTNFFAPSSRFGTPEDLKSLIDRAHELGLLVLMDIVHSHSSNNTLDGLNMFDGTDGHYFHPGSRGYHWMWDSRLFNYGSWEVLRYLLSNARWWLDEYKFDGFRFDGVTSMMYTHHGLQVSFTGNYSEYFGLATDVEAVVYMMLVNDLIHGLFPEAVSIGEDVSGMPTFCLPTQDGGIGFNYRLHMAVADKWIELLKKQDEDWRMGDIVHTLTNRRWLEKCVVYAESHDQALVGDKTLAFWLMDKDMYDFMALDRPSTPLIDRGIALHKMIRLITMGLGGEGYLNFMGNEFGHPEWIDFPRGEQHLPNGKIVPGNNNSYDKCRRRFDLGDADYLRYHGMQEFDRAMQHLEERYGFMTSEHQYISRKNEGDRVIIFERDNLVFVFNFHWTNSYSDYKVGCLKPGKYKIVLDSDDTLFGGFNRLNHTAEYFTSEGWYDDRPRSFLVYAPSRTAVVYALADGVESEPIELSDGVESEPIELSVGVESEPIELSVEEAESEPIERSVEEVESETTQQSVEVESETTQQSVEVESETTQ.

Residues 1–47 constitute a chloroplast transit peptide; sequence MVYTISGIRFPVLPSLHKSTLRCDRRASSHSFFLKNNSSSFSRTSLY. Positions 83 to 130 are disordered; that stretch reads LENPDITSEDAQNLEDLTMKDGNKYNIDESTSSYREVGDEKGSVTSSS. Residues 99 to 109 are compositionally biased toward basic and acidic residues; sequence LTMKDGNKYNI. Catalysis depends on Asp494, which acts as the Nucleophile. The active-site Proton donor is the Glu549. The tract at residues 870–922 is disordered; that stretch reads VESEPIELSVEEAESEPIERSVEEVESETTQQSVEVESETTQQSVEVESETTQ. The span at 897–922 shows a compositional bias: low complexity; sequence ETTQQSVEVESETTQQSVEVESETTQ.

Belongs to the glycosyl hydrolase 13 family. GlgB subfamily. Monomer. In terms of tissue distribution, expressed in roots, leaves, stipules, pods and flowers.

Its subcellular location is the plastid. It localises to the chloroplast. The protein localises to the amyloplast. It catalyses the reaction Transfers a segment of a (1-&gt;4)-alpha-D-glucan chain to a primary hydroxy group in a similar glucan chain.. It participates in glycan biosynthesis; starch biosynthesis. Its function is as follows. Catalyzes the formation of the alpha-1,6-glucosidic linkages in starch by scission of a 1,4-alpha-linked oligosaccharide from growing alpha-1,4-glucan chains and the subsequent attachment of the oligosaccharide to the alpha-1,6 position. May preferentially transfer short chains during branching. Responsible for the synthesis of about 75% of the amylopectin found in the starch granules of mature embryos. This is 1,4-alpha-glucan-branching enzyme 1, chloroplastic/amyloplastic (SBEI) from Pisum sativum (Garden pea).